Consider the following 940-residue polypeptide: Receptor-like protein 9b (940 aa).

The N-terminal stretch at Met1–Ser28 is a signal peptide. At Leu29 to Glu895 the chain is on the extracellular side. N-linked (GlcNAc...) asparagine glycosylation is found at Asn53, Asn63, Asn66, Asn101, Asn115, and Asn151. 16 LRR repeats span residues Phe108–Arg136, Leu137–Ser163, Lys165–Asn185, Leu186–Asn211, Gln213–Leu232, Lys233–Ser255, Thr257–Asn279, Asp281–Asn304, Ser306–Pro330, Lys331–Gln354, Lys355–Lys378, Tyr379–Asn402, His403–Val426, Leu427–Glu450, Lys452–Gly475, and Ser477–Ser502. 2 N-linked (GlcNAc...) asparagine glycosylation sites follow: Asn270 and Asn304. N-linked (GlcNAc...) asparagine glycosylation is found at Asn361, Asn389, and Asn402. Residues Asn434 and Asn463 are each glycosylated (N-linked (GlcNAc...) asparagine). Residues Leu503–Asn522 form an LRR 17; degenerate repeat. 11 LRR repeats span residues Val523 to Gly546, Phe547 to Lys570, Pro571 to Gly593, Asp595 to Ile615, Lys616 to Glu639, Ile641 to Leu662, Arg663 to Val686, Phe752 to Leu776, Gln777 to Asn799, Thr801 to Leu824, and Tyr826 to Thr849. N-linked (GlcNAc...) asparagine glycosylation occurs at Asn685. Asn783 and Asn799 each carry an N-linked (GlcNAc...) asparagine glycan. N-linked (GlcNAc...) asparagine glycosylation is found at Asn831, Asn836, Asn867, and Asn873. A helical membrane pass occupies residues Ile896–Leu916. The Cytoplasmic segment spans residues Cys917–Val940.

Belongs to the RLP family.

The protein resides in the cell membrane. This Arabidopsis thaliana (Mouse-ear cress) protein is Receptor-like protein 9b.